Here is a 112-residue protein sequence, read N- to C-terminus: Large ribosomal subunit protein bL17 (112 aa).

The protein belongs to the bacterial ribosomal protein bL17 family. As to quaternary structure, part of the 50S ribosomal subunit. Contacts protein L32.

This chain is Large ribosomal subunit protein bL17, found in Desulforamulus reducens (strain ATCC BAA-1160 / DSM 100696 / MI-1) (Desulfotomaculum reducens).